A 173-amino-acid chain; its full sequence is MAKKDPLEELLEFVRSVAGEDGVRVFKELMRYEDISEEQLTETLGMKPNDVRRALYKLERYGLVRNYKIRNENDGTYIYYWYVDRETLNRNLLKIKKSVLEKLKRRLESEEDQYFYCPACGLQFSYEEAMGYDFTCPRCGEPLELAESNPRKKLLEKIVKRLEEEIKHEESVL.

Residues 6 to 89 (PLEELLEFVR…YWYVDRETLN (84 aa)) enclose the HTH TFE/IIEalpha-type domain.

The protein belongs to the TFE family. As to quaternary structure, monomer. Interaction with RNA polymerase subunits RpoF and RpoE is necessary for Tfe stimulatory transcription activity. Able to interact with Tbp and RNA polymerase in the absence of DNA promoter. Interacts both with the preinitiation and elongation complexes.

Transcription factor that plays a role in the activation of archaeal genes transcribed by RNA polymerase. Facilitates transcription initiation by enhancing TATA-box recognition by TATA-box-binding protein (Tbp), and transcription factor B (Tfb) and RNA polymerase recruitment. Not absolutely required for transcription in vitro, but particularly important in cases where Tbp or Tfb function is not optimal. It dynamically alters the nucleic acid-binding properties of RNA polymerases by stabilizing the initiation complex and destabilizing elongation complexes. Seems to translocate with the RNA polymerase following initiation and acts by binding to the non template strand of the transcription bubble in elongation complexes. This is Transcription factor E from Ignicoccus hospitalis (strain KIN4/I / DSM 18386 / JCM 14125).